The chain runs to 1473 residues: DNA topoisomerase 2 (1473 aa).

A disordered region spans residues 1–20 (MATKLPLQNSNAANVAKAPA). Low complexity predominate over residues 9-20 (NSNAANVAKAPA). Residues N91, N120, 148-150 (SSN), and 161-168 (GRNGYGAK) each bind ATP. An interaction with DNA region spans residues 345-347 (NKK). 378–380 (QTK) lines the ATP pocket. Positions 455–569 (CTLILTEGDS…SLLQVPSFLV (115 aa)) constitute a Toprim domain. E461, D538, and D540 together coordinate Mg(2+). Positions 704–1163 (IPSMVDGLKP…TPKSLWLSDL (460 aa)) constitute a Topo IIA-type catalytic domain. The O-(5'-phospho-DNA)-tyrosine intermediate role is filled by Y794. An interaction with DNA region spans residues 980–989 (KLTTTIATSN). Disordered regions lie at residues 1195–1230 (SGAA…SYSA), 1242–1297 (KPKA…EVEE), and 1313–1473 (GSAP…EDDE). Basic residues-rich tracts occupy residues 1200–1216 (KVKR…KTTK) and 1278–1288 (PKGRQGAKKKA). Low complexity predominate over residues 1351 to 1360 (KPAATKAAKP). 2 stretches are compositionally biased toward polar residues: residues 1394–1404 (SPFNKKSSSVM) and 1417–1427 (ENVAGNSSSEK). Residues 1453–1473 (SESESANDSEFDDIEDDEDDE) show a composition bias toward acidic residues.

This sequence belongs to the type II topoisomerase family. As to quaternary structure, homodimer. Mg(2+) is required as a cofactor. Requires Mn(2+) as cofactor. Ca(2+) serves as cofactor.

It carries out the reaction ATP-dependent breakage, passage and rejoining of double-stranded DNA.. Functionally, control of topological states of DNA by transient breakage and subsequent rejoining of DNA strands. Topoisomerase II makes double-strand breaks. The sequence is that of DNA topoisomerase 2 (TOP2) from Arabidopsis thaliana (Mouse-ear cress).